The primary structure comprises 146 residues: Anti-sigma F factor (146 aa).

Belongs to the anti-sigma-factor family.

It carries out the reaction L-seryl-[protein] + ATP = O-phospho-L-seryl-[protein] + ADP + H(+). It catalyses the reaction L-threonyl-[protein] + ATP = O-phospho-L-threonyl-[protein] + ADP + H(+). Its function is as follows. Binds to sigma F and blocks its ability to form an RNA polymerase holoenzyme (E-sigma F). Phosphorylates SpoIIAA on a serine residue. This phosphorylation may enable SpoIIAA to act as an anti-anti-sigma factor that counteracts SpoIIAB and thus releases sigma F from inhibition. This Bacillus licheniformis (strain ATCC 14580 / DSM 13 / JCM 2505 / CCUG 7422 / NBRC 12200 / NCIMB 9375 / NCTC 10341 / NRRL NRS-1264 / Gibson 46) protein is Anti-sigma F factor.